Reading from the N-terminus, the 407-residue chain is Phosphopentomutase (407 aa).

Mn(2+) is bound by residues D10, D306, H311, D347, H348, and H359.

This sequence belongs to the phosphopentomutase family. Mn(2+) is required as a cofactor.

It localises to the cytoplasm. It catalyses the reaction 2-deoxy-alpha-D-ribose 1-phosphate = 2-deoxy-D-ribose 5-phosphate. The catalysed reaction is alpha-D-ribose 1-phosphate = D-ribose 5-phosphate. It participates in carbohydrate degradation; 2-deoxy-D-ribose 1-phosphate degradation; D-glyceraldehyde 3-phosphate and acetaldehyde from 2-deoxy-alpha-D-ribose 1-phosphate: step 1/2. Its function is as follows. Isomerase that catalyzes the conversion of deoxy-ribose 1-phosphate (dRib-1-P) and ribose 1-phosphate (Rib-1-P) to deoxy-ribose 5-phosphate (dRib-5-P) and ribose 5-phosphate (Rib-5-P), respectively. This is Phosphopentomutase from Salmonella arizonae (strain ATCC BAA-731 / CDC346-86 / RSK2980).